A 90-amino-acid polypeptide reads, in one-letter code: MSRTVFCQRLKKEGPGLDFQLYPGELGKRIFDNISKEAWTEWQKKQVMLINEKKLNMMNLEHRQLLEKEMVSYLFEAGEVAIDGYTPPSQ.

It belongs to the Fe(2+)-trafficking protein family.

In terms of biological role, could be a mediator in iron transactions between iron acquisition and iron-requiring processes, such as synthesis and/or repair of Fe-S clusters in biosynthetic enzymes. The polypeptide is Probable Fe(2+)-trafficking protein (Aeromonas salmonicida (strain A449)).